The following is a 418-amino-acid chain: CinA-like protein (418 aa).

Belongs to the CinA family.

The chain is CinA-like protein from Cyanothece sp. (strain PCC 7425 / ATCC 29141).